Consider the following 123-residue polypeptide: Ribosome-binding factor A (123 aa).

Belongs to the RbfA family. As to quaternary structure, monomer. Binds 30S ribosomal subunits, but not 50S ribosomal subunits or 70S ribosomes.

Its subcellular location is the cytoplasm. In terms of biological role, one of several proteins that assist in the late maturation steps of the functional core of the 30S ribosomal subunit. Associates with free 30S ribosomal subunits (but not with 30S subunits that are part of 70S ribosomes or polysomes). Required for efficient processing of 16S rRNA. May interact with the 5'-terminal helix region of 16S rRNA. This Cupriavidus taiwanensis (strain DSM 17343 / BCRC 17206 / CCUG 44338 / CIP 107171 / LMG 19424 / R1) (Ralstonia taiwanensis (strain LMG 19424)) protein is Ribosome-binding factor A.